Reading from the N-terminus, the 1135-residue chain is Retinoblastoma-like protein 2 (1135 aa).

Residues 1 to 43 are disordered; that stretch reads MASGGNQSPPPPPAAAASSEEEEEDGDAADRAQPAGSPSHQIQ. S410 carries the phosphoserine modification. T414 is subject to Phosphothreonine. Residues 414–613 are domain A; the sequence is TPVSTAAHSL…DRIRDNENRV (200 aa). A pocket; binds E1A region spans residues 414–1021; that stretch reads TPVSTAAHSL…QAFAMKYSQA (608 aa). O-linked (GlcNAc) serine glycosylation is present at S417. Positions 614-824 are spacer; the sequence is PTCEEVMPPQ…PGQPLTSSSI (211 aa). Residue S636 is modified to Phosphoserine. At T639 the chain carries Phosphothreonine. S659, S669, S684, S942, S946, S960, S965, and S967 each carry phosphoserine. Polar residues-rich tracts occupy residues 661 to 674, 683 to 692, 935 to 950, and 958 to 969; these read TTLY…TVST, DSPSEGSTSG, SGSS…PTEL, and DSSPVMRSNSTL. Disordered regions lie at residues 661-698 and 930-994; these read TTLY…PPQP and GKRR…VEEE. Residues 825–1021 are domain B; that stretch reads RPRKTSSLAL…QAFAMKYSQA (197 aa). T968 is modified (phosphothreonine). Positions 971–981 are enriched in pro residues; sequence VPQPSSAPPTP. A phosphoserine mark is found at S975 and S976. T980 is modified (phosphothreonine). S1031, S1064, S1076, and S1108 each carry phosphoserine.

This sequence belongs to the retinoblastoma protein (RB) family. In terms of assembly, interacts with AATF and RINT1. Component of the DREAM complex (also named LINC complex) at least composed of E2F4, E2F5, LIN9, LIN37, LIN52, LIN54, MYBL1, MYBL2, RBL1, RBL2, RBBP4, TFDP1 and TFDP2. The complex exists in quiescent cells where it represses cell cycle-dependent genes. It dissociates in S phase when LIN9, LIN37, LIN52 and LIN54 form a subcomplex that binds to MYBL2. Interacts with USP4. Interacts with KMT5B, KMT5C and USP4. Interacts with PML. Interacts with RBBP9. Interacts with CD53. In terms of processing, during G0 and early G1 phase of the cell cycle, phosphorylated on Ser-636 and on 5 sites within the domain B. Phosphorylation on Ser-669 in G1 leads to its ubiquitin-dependent proteolysis.

The protein localises to the nucleus. In terms of biological role, key regulator of entry into cell division. Directly involved in heterochromatin formation by maintaining overall chromatin structure and, in particular, that of constitutive heterochromatin by stabilizing histone methylation. Recruits and targets histone methyltransferases KMT5B and KMT5C, leading to epigenetic transcriptional repression. Controls histone H4 'Lys-20' trimethylation. Probably acts as a transcription repressor by recruiting chromatin-modifying enzymes to promoters. Potent inhibitor of E2F-mediated trans-activation, associates preferentially with E2F5. Binds to cyclins A and E. Binds to and may be involved in the transforming capacity of the adenovirus E1A protein. May act as a tumor suppressor. This Mus musculus (Mouse) protein is Retinoblastoma-like protein 2 (Rbl2).